The following is a 399-amino-acid chain: L-methionine gamma-lyase (399 aa).

Residues 59 to 61 (YTR) and 89 to 90 (GM) each bind pyridoxal 5'-phosphate. Tyr-114 contacts substrate. 209-211 (SAT) lines the pyridoxal 5'-phosphate pocket. An N6-(pyridoxal phosphate)lysine modification is found at Lys-212. A substrate-binding site is contributed by Arg-376.

This sequence belongs to the trans-sulfuration enzymes family. L-methionine gamma-lyase subfamily. Homotetramer; dimer of active dimers. Pyridoxal 5'-phosphate serves as cofactor.

The catalysed reaction is L-methionine + H2O = methanethiol + 2-oxobutanoate + NH4(+). Its function is as follows. Catalyzes the alpha,gamma-elimination of L-methionine to produce methanethiol, 2-oxobutanoate and ammonia. The chain is L-methionine gamma-lyase from Pseudomonas deceptionensis.